Here is a 345-residue protein sequence, read N- to C-terminus: Annexin A9 (345 aa).

Annexin repeat units follow at residues 41-112 (FSVD…ALLQ), 113-184 (PTAQ…ALAK), 197-266 (NLAE…GLAS), and 270-341 (NTPL…ALCR).

This sequence belongs to the annexin family. As to quaternary structure, homodimer. As to expression, expressed in the stratified squamous skin epithelium, but not in epithelia of other types (at protein level).

Low affinity receptor for acetylcholine known to be targeted by disease-causing pemphigus vulgaris antibodies in keratinocytes. In Homo sapiens (Human), this protein is Annexin A9 (ANXA9).